A 172-amino-acid polypeptide reads, in one-letter code: Disulfide bond formation protein B (172 aa).

Topologically, residues 1–11 (MNPFRWSFRAQ) are cytoplasmic. The chain crosses the membrane as a helical span at residues 12–28 (FLLGFLACAGLLAYAIY). Topologically, residues 29–46 (VQLHLGLEPCPLCIFQRI) are periplasmic. An intrachain disulfide couples Cys-38 to Cys-41. Residues 47 to 63 (AFAALAMFFLLGALHGP) form a helical membrane-spanning segment. The Cytoplasmic portion of the chain corresponds to 64-70 (RAAAGRK). Residues 71–88 (VYGVLSFIAAGVGMGIAA) traverse the membrane as a helical segment. Residues 89 to 145 (RHVWVQIRPKDMMSSCGPPLSFLSETMGPFEVFRTVLTGTGDCGNIDWRFLGLSMPM) lie on the Periplasmic side of the membrane. Cys-104 and Cys-131 are oxidised to a cystine. A helical transmembrane segment spans residues 146 to 164 (WSMVWFVGLALWALYAGFK). Over 165–172 (ARRSSVHH) the chain is Cytoplasmic.

This sequence belongs to the DsbB family.

Its subcellular location is the cell inner membrane. Its function is as follows. Required for disulfide bond formation in some periplasmic proteins. Acts by oxidizing the DsbA protein. This chain is Disulfide bond formation protein B, found in Xanthomonas euvesicatoria pv. vesicatoria (strain 85-10) (Xanthomonas campestris pv. vesicatoria).